The sequence spans 315 residues: 4-hydroxy-3-methylbut-2-enyl diphosphate reductase (315 aa).

Cys12 provides a ligand contact to [4Fe-4S] cluster. (2E)-4-hydroxy-3-methylbut-2-enyl diphosphate contacts are provided by His43 and His81. Dimethylallyl diphosphate-binding residues include His43 and His81. The isopentenyl diphosphate site is built by His43 and His81. Cys103 provides a ligand contact to [4Fe-4S] cluster. His131 contacts (2E)-4-hydroxy-3-methylbut-2-enyl diphosphate. His131 is a binding site for dimethylallyl diphosphate. Position 131 (His131) interacts with isopentenyl diphosphate. The active-site Proton donor is the Glu133. Thr170 contributes to the (2E)-4-hydroxy-3-methylbut-2-enyl diphosphate binding site. Position 198 (Cys198) interacts with [4Fe-4S] cluster. The (2E)-4-hydroxy-3-methylbut-2-enyl diphosphate site is built by Ser226, Asn228, and Ser271. 3 residues coordinate dimethylallyl diphosphate: Ser226, Asn228, and Ser271. Ser226, Asn228, and Ser271 together coordinate isopentenyl diphosphate.

The protein belongs to the IspH family. It depends on [4Fe-4S] cluster as a cofactor.

It catalyses the reaction isopentenyl diphosphate + 2 oxidized [2Fe-2S]-[ferredoxin] + H2O = (2E)-4-hydroxy-3-methylbut-2-enyl diphosphate + 2 reduced [2Fe-2S]-[ferredoxin] + 2 H(+). The catalysed reaction is dimethylallyl diphosphate + 2 oxidized [2Fe-2S]-[ferredoxin] + H2O = (2E)-4-hydroxy-3-methylbut-2-enyl diphosphate + 2 reduced [2Fe-2S]-[ferredoxin] + 2 H(+). It participates in isoprenoid biosynthesis; dimethylallyl diphosphate biosynthesis; dimethylallyl diphosphate from (2E)-4-hydroxy-3-methylbutenyl diphosphate: step 1/1. Its pathway is isoprenoid biosynthesis; isopentenyl diphosphate biosynthesis via DXP pathway; isopentenyl diphosphate from 1-deoxy-D-xylulose 5-phosphate: step 6/6. Its function is as follows. Catalyzes the conversion of 1-hydroxy-2-methyl-2-(E)-butenyl 4-diphosphate (HMBPP) into a mixture of isopentenyl diphosphate (IPP) and dimethylallyl diphosphate (DMAPP). Acts in the terminal step of the DOXP/MEP pathway for isoprenoid precursor biosynthesis. This chain is 4-hydroxy-3-methylbut-2-enyl diphosphate reductase, found in Geobacillus sp. (strain WCH70).